We begin with the raw amino-acid sequence, 270 residues long: tRNA pseudouridine synthase A (270 aa).

The active-site Nucleophile is aspartate 60. Substrate is bound at residue tyrosine 118.

This sequence belongs to the tRNA pseudouridine synthase TruA family. In terms of assembly, homodimer.

The catalysed reaction is uridine(38/39/40) in tRNA = pseudouridine(38/39/40) in tRNA. Functionally, formation of pseudouridine at positions 38, 39 and 40 in the anticodon stem and loop of transfer RNAs. The protein is tRNA pseudouridine synthase A of Salmonella agona (strain SL483).